The primary structure comprises 247 residues: 5-oxoprolinase subunit A 1 (247 aa).

It belongs to the LamB/PxpA family. As to quaternary structure, forms a complex composed of PxpA, PxpB and PxpC.

It carries out the reaction 5-oxo-L-proline + ATP + 2 H2O = L-glutamate + ADP + phosphate + H(+). Its function is as follows. Catalyzes the cleavage of 5-oxoproline to form L-glutamate coupled to the hydrolysis of ATP to ADP and inorganic phosphate. The polypeptide is 5-oxoprolinase subunit A 1 (Ralstonia nicotianae (strain ATCC BAA-1114 / GMI1000) (Ralstonia solanacearum)).